Reading from the N-terminus, the 423-residue chain is Probable sodium/metabolite cotransporter BASS4, chloroplastic (423 aa).

A chloroplast-targeting transit peptide spans 1 to 55 (MVTTHHLCLLRSTVLSVPVRLRAPRAPPHPRLPTASASASSYHGPTHLRRLRPLR). Residues 23–45 (APRAPPHPRLPTASASASSYHGP) form a disordered region. 9 consecutive transmembrane segments (helical) span residues 96-116 (FLPL…TLGC), 123-140 (LSKY…LTLR), 153-173 (AGLF…QFIM), 182-202 (FITG…GVTL), 212-232 (LALA…PLSL), 244-264 (LPTE…IILG), 284-301 (GFSV…WIQV), 315-335 (AFAV…AFNA), and 389-409 (LLVI…SIIV).

It belongs to the bile acid:sodium symporter (BASS) (TC 2.A.28) family.

Its subcellular location is the membrane. The protein resides in the plastid. It is found in the chloroplast envelope. Functionally, may function as sodium-coupled metabolite transporter across the chloroplast envelope. This chain is Probable sodium/metabolite cotransporter BASS4, chloroplastic (BASS4), found in Oryza sativa subsp. indica (Rice).